Reading from the N-terminus, the 96-residue chain is Acylphosphatase (96 aa).

The Acylphosphatase-like domain maps to 4-91; the sequence is RVHVYVKGKV…GEFDDFRILY (88 aa). Active-site residues include Arg19 and Asn37.

The protein belongs to the acylphosphatase family.

It carries out the reaction an acyl phosphate + H2O = a carboxylate + phosphate + H(+). The protein is Acylphosphatase (acyP) of Syntrophus aciditrophicus (strain SB).